The chain runs to 596 residues: Protein NRT1/ PTR FAMILY 3.1 (596 aa).

Basic and acidic residues predominate over residues 1 to 16 (MEEQSKNKISEEEKQL). A disordered region spans residues 1 to 23 (MEEQSKNKISEEEKQLHGRPNRP). A run of 12 helical transmembrane segments spans residues 27-47 (LITM…VVGF), 73-93 (FAGT…SFAG), 98-118 (ITFA…SAII), 137-157 (TAQL…SGGI), 185-205 (NWYY…LVWI), 213-233 (LGLG…VGGF), 334-354 (MGPI…QGTF), 372-392 (IPAG…IIFY), 416-436 (MGIG…VEVK), 453-473 (IVPI…VAEA), 497-517 (ALFW…VTLV), and 542-562 (YFYW…LWCA).

This sequence belongs to the major facilitator superfamily. Proton-dependent oligopeptide transporter (POT/PTR) (TC 2.A.17) family. As to expression, expressed in shoots, stems, leaves, flowers and siliques.

Its subcellular location is the membrane. Functionally, may act as an efflux-type nitrite transporter. Not regulated by the PII protein involved in the regulation of nitrite uptake into higher plant chloroplasts. The protein is Protein NRT1/ PTR FAMILY 3.1 (NPF3.1) of Arabidopsis thaliana (Mouse-ear cress).